Consider the following 521-residue polypeptide: Bifunctional purine biosynthesis protein PurH (521 aa).

In terms of domain architecture, MGS-like spans 1–145; it reads MIKQALISVS…KNHRDVTVVV (145 aa).

It belongs to the PurH family.

The enzyme catalyses (6R)-10-formyltetrahydrofolate + 5-amino-1-(5-phospho-beta-D-ribosyl)imidazole-4-carboxamide = 5-formamido-1-(5-phospho-D-ribosyl)imidazole-4-carboxamide + (6S)-5,6,7,8-tetrahydrofolate. It carries out the reaction IMP + H2O = 5-formamido-1-(5-phospho-D-ribosyl)imidazole-4-carboxamide. The protein operates within purine metabolism; IMP biosynthesis via de novo pathway; 5-formamido-1-(5-phospho-D-ribosyl)imidazole-4-carboxamide from 5-amino-1-(5-phospho-D-ribosyl)imidazole-4-carboxamide (10-formyl THF route): step 1/1. It functions in the pathway purine metabolism; IMP biosynthesis via de novo pathway; IMP from 5-formamido-1-(5-phospho-D-ribosyl)imidazole-4-carboxamide: step 1/1. This Paraburkholderia phymatum (strain DSM 17167 / CIP 108236 / LMG 21445 / STM815) (Burkholderia phymatum) protein is Bifunctional purine biosynthesis protein PurH.